A 413-amino-acid polypeptide reads, in one-letter code: 1-deoxy-D-xylulose 5-phosphate reductoisomerase (413 aa).

The NADPH site is built by T21, G22, S23, I24, G47, and N127. 1-deoxy-D-xylulose 5-phosphate is bound at residue K128. E129 lines the NADPH pocket. D151 serves as a coordination point for Mn(2+). 1-deoxy-D-xylulose 5-phosphate is bound by residues S152, E153, S177, and H200. E153 lines the Mn(2+) pocket. G206 lines the NADPH pocket. Residues S213, N218, K219, and E222 each contribute to the 1-deoxy-D-xylulose 5-phosphate site. E222 contacts Mn(2+).

This sequence belongs to the DXR family. The cofactor is Mg(2+). Requires Mn(2+) as cofactor.

It carries out the reaction 2-C-methyl-D-erythritol 4-phosphate + NADP(+) = 1-deoxy-D-xylulose 5-phosphate + NADPH + H(+). It functions in the pathway isoprenoid biosynthesis; isopentenyl diphosphate biosynthesis via DXP pathway; isopentenyl diphosphate from 1-deoxy-D-xylulose 5-phosphate: step 1/6. Catalyzes the NADPH-dependent rearrangement and reduction of 1-deoxy-D-xylulose-5-phosphate (DXP) to 2-C-methyl-D-erythritol 4-phosphate (MEP). The protein is 1-deoxy-D-xylulose 5-phosphate reductoisomerase of Mycobacterium bovis (strain ATCC BAA-935 / AF2122/97).